A 295-amino-acid polypeptide reads, in one-letter code: Probable CBASS effector molecule IK1_05631 (295 aa).

Helical transmembrane passes span 26 to 46, 56 to 76, 167 to 187, and 190 to 210; these read IFYAVRISISILIPILSISIY, SNTGVWFSVIGSIWLLIAYQI, ILLFTVSVLYLFLTIAFGFFV, and SMQEYIIKILLPSMSILIYGF.

Its subcellular location is the cell membrane. Functionally, effector protein of a CBASS antiviral system. CBASS (cyclic oligonucleotide-based antiphage signaling system) provides immunity against bacteriophage. The CD-NTase protein synthesizes cyclic nucleotides in response to infection; these serve as specific second messenger signals. The signals activate a diverse range of effectors, leading to bacterial cell death and thus abortive phage infection. A type I-B CBASS system. Its function is as follows. Protects B.subtilis against phage infection. When IK1_05630 and IK1_05631 are introduced in B.subtilis BEST7003 there is 1000-fold protection against phage SBSphiC. Both genes are required for protection. Activation leads to bacterial cell lysis and death, which occurs before the phage has finished its replication cycle, thus protecting non-infected bacteria by aborting the phage infection and preventing its propagation. In Bacillus cereus (strain VD146), this protein is Probable CBASS effector molecule IK1_05631.